Consider the following 173-residue polypeptide: Membrane-bound hydrogenase subunit beta (173 aa).

It belongs to the complex I 30 kDa subunit family. As to quaternary structure, the membrane-bound hydrogenase complex is composed of MbhK and MbhL, and may also contain MbhJ. The cofactor is Ni(2+).

Its subcellular location is the cell membrane. It carries out the reaction H2 + 2 oxidized [2Fe-2S]-[ferredoxin] = 2 reduced [2Fe-2S]-[ferredoxin] + 2 H(+). Inhibited by 0.1 mM Cu(2+). Its function is as follows. Beta subunit of a hydrogen-evolving hydrogenase that utilizes protons both as a substrate for hydrogen production and proton translocation. Acts by coupling the redox reaction via ferredoxin and iron-sulfur (Fe-S) clusters to proton translocation across the membrane thereby conserving the redox energy in a proton gradient. The sequence is that of Membrane-bound hydrogenase subunit beta from Pyrococcus furiosus (strain ATCC 43587 / DSM 3638 / JCM 8422 / Vc1).